Here is a 980-residue protein sequence, read N- to C-terminus: Putative formate dehydrogenase YrhE (980 aa).

The 2Fe-2S ferredoxin-type domain occupies 5–81 (KSISVRVDGT…GMSIDLSGNR (77 aa)). Cys39, Cys50, Cys53, and Cys65 together coordinate [2Fe-2S] cluster. A 4Fe-4S His(Cys)3-ligated-type domain is found at 81–121 (RVKEAQTEAMDRLLENHLLYCTVCDNNNGNCTLHNTAEMMG). Residues His97, Cys101, Cys104, Cys111, Cys153, Cys156, Cys159, Cys163, Cys196, Cys199, Cys202, Cys206, Cys270, Cys273, Cys277, and Cys305 each contribute to the [4Fe-4S] cluster site. 4Fe-4S ferredoxin-type domains follow at residues 144–171 (PFYRYDPNQCIACGQCVEVCQNLQVNET) and 187–216 (EGVPINESSCVSCGQCVTVCPCNALMEKSM). The tract at residues 258–980 (MRETRTKKTK…NRPGYVHLTD (723 aa)) is formate dehydrogenase. The 4Fe-4S Mo/W bis-MGD-type domain maps to 263 to 319 (TKKTKTVCTFCGVGCSFEVWTKGRDILKIQPVSDAPVNAISTCVKGKFGWDFVNSKE). The disordered stretch occupies residues 944-980 (ETAPLPKTNPRNKKRHPQNGVEAERKWNRPGYVHLTD).

In the C-terminal section; belongs to the prokaryotic molybdopterin-containing oxidoreductase family. It depends on [2Fe-2S] cluster as a cofactor. [4Fe-4S] cluster serves as cofactor. Mo-bis(molybdopterin guanine dinucleotide) is required as a cofactor.

The enzyme catalyses formate + NAD(+) = CO2 + NADH. The sequence is that of Putative formate dehydrogenase YrhE (yrhE) from Bacillus subtilis (strain 168).